A 266-amino-acid polypeptide reads, in one-letter code: 3-methyl-2-oxobutanoate hydroxymethyltransferase (266 aa).

Mg(2+) contacts are provided by aspartate 45 and aspartate 84. Residues 45–46, aspartate 84, and lysine 113 contribute to the 3-methyl-2-oxobutanoate site; that span reads DS. A Mg(2+)-binding site is contributed by glutamate 115. Glutamate 183 functions as the Proton acceptor in the catalytic mechanism.

The protein belongs to the PanB family. Homodecamer; pentamer of dimers. It depends on Mg(2+) as a cofactor.

It localises to the cytoplasm. It carries out the reaction 3-methyl-2-oxobutanoate + (6R)-5,10-methylene-5,6,7,8-tetrahydrofolate + H2O = 2-dehydropantoate + (6S)-5,6,7,8-tetrahydrofolate. It functions in the pathway cofactor biosynthesis; (R)-pantothenate biosynthesis; (R)-pantoate from 3-methyl-2-oxobutanoate: step 1/2. In terms of biological role, catalyzes the reversible reaction in which hydroxymethyl group from 5,10-methylenetetrahydrofolate is transferred onto alpha-ketoisovalerate to form ketopantoate. This Coxiella burnetii (strain Dugway 5J108-111) protein is 3-methyl-2-oxobutanoate hydroxymethyltransferase.